The primary structure comprises 167 residues: Gametocyte-specific factor 1 (167 aa).

CHHC U11-48K-type zinc fingers lie at residues 14 to 41 (LLQC…RKNH) and 48 to 75 (LATC…DDKS). Zn(2+) is bound by residues cysteine 17, histidine 23, histidine 33, cysteine 37, cysteine 51, histidine 57, histidine 67, and cysteine 71.

It belongs to the UPF0224 (FAM112) family.

It localises to the cytoplasm. Its function is as follows. Required for spermatogenesis and is involved in the suppression of retrotransposon transcription in male germ cells. This is Gametocyte-specific factor 1 (GTSF1) from Bos taurus (Bovine).